A 288-amino-acid chain; its full sequence is Single myb histone 4 (288 aa).

Disordered stretches follow at residues 1–42 (MGAP…PVLS), 62–87 (GLGS…SQPL), and 181–206 (DSLA…KPSK). An HTH myb-type domain is found at 1 to 60 (MGAPKQKWTSEEEDALRAGVRKHGAGKWRTIQKDPEFSPVLSSRSNIDLKDKWRNLSFSA). A DNA-binding region (H-T-H motif) is located at residues 28-56 (WRTIQKDPEFSPVLSSRSNIDLKDKWRNL). Over residues 76 to 87 (PSSSPSSSSQPL) the composition is skewed to low complexity. Residues 113 to 181 (TLPKYGAMIM…KIDKSYRLPD (69 aa)) enclose the H15 domain. Residues 230 to 250 (KVADAEAKAHDAHDQTMEAER) adopt a coiled-coil conformation.

Belongs to the histone H1/H5 family. SMH subfamily. Forms a homodimer and heterodimers.

The protein resides in the nucleus. The protein localises to the chromosome. Its subcellular location is the nucleolus. It is found in the telomere. Binds preferentially double-stranded telomeric repeats, but may also bind to the single telomeric strand. The chain is Single myb histone 4 (SMH4) from Zea mays (Maize).